Reading from the N-terminus, the 208-residue chain is MSGKTSYKDLLLAPIAKNNPIALQILGICSALAVTTKLETAFVMAIAVTLVTGLSNLFVSLIRNYIPNSIRIIVQLAIIASLVIVVDQILKAYAYGLSKQLSVFVGLIITNCIVMGRAEAFAMKSPPVESFVDGIGNGLGYGSMLIIVAFFRELIGSGKLFGMTIFETIQNGGWYQANGLFLLAPSAFFIIGFVIWGLRTWKPEQQEK.

The next 5 helical transmembrane spans lie at 42 to 62 (FVMAIAVTLVTGLSNLFVSLI), 72 to 92 (IIVQLAIIASLVIVVDQILKA), 103 to 123 (VFVGLIITNCIVMGRAEAFAM), 131 to 151 (FVDGIGNGLGYGSMLIIVAFF), and 178 to 198 (NGLFLLAPSAFFIIGFVIWGL).

Belongs to the NqrDE/RnfAE family. In terms of assembly, composed of six subunits; NqrA, NqrB, NqrC, NqrD, NqrE and NqrF.

The protein resides in the cell inner membrane. The enzyme catalyses a ubiquinone + n Na(+)(in) + NADH + H(+) = a ubiquinol + n Na(+)(out) + NAD(+). Its function is as follows. NQR complex catalyzes the reduction of ubiquinone-1 to ubiquinol by two successive reactions, coupled with the transport of Na(+) ions from the cytoplasm to the periplasm. NqrA to NqrE are probably involved in the second step, the conversion of ubisemiquinone to ubiquinol. In Haemophilus influenzae (strain 86-028NP), this protein is Na(+)-translocating NADH-quinone reductase subunit D.